Here is a 435-residue protein sequence, read N- to C-terminus: Probable alpha-galactosidase B (435 aa).

A signal peptide spans 1–18 (MLTSLSLTALALLPSANA). An intrachain disulfide couples Cys-41 to Cys-73. Asn-81 is a glycosylation site (N-linked (GlcNAc...) asparagine). A disulfide bond links Cys-123 and Cys-153. Asp-151 functions as the Nucleophile in the catalytic mechanism. Residues Asn-158 and Asn-176 are each glycosylated (N-linked (GlcNAc...) asparagine). 221 to 225 (DWGQA) contributes to the substrate binding site. Asn-232 is a glycosylation site (N-linked (GlcNAc...) asparagine). Asp-243 (proton donor) is an active-site residue. An N-linked (GlcNAc...) asparagine glycan is attached at Asn-378.

This sequence belongs to the glycosyl hydrolase 27 family.

It is found in the secreted. The catalysed reaction is Hydrolysis of terminal, non-reducing alpha-D-galactose residues in alpha-D-galactosides, including galactose oligosaccharides, galactomannans and galactolipids.. Hydrolyzes a variety of simple alpha-D-galactoside as well as more complex molecules such as oligosaccharides and polysaccharides. This chain is Probable alpha-galactosidase B (agl1), found in Penicillium simplicissimum.